Consider the following 143-residue polypeptide: uncharacterized protein (143 aa).

Residues 24 to 78 form the HTH cro/C1-type domain; that stretch reads IRQRREWQNMSQTTLGEAIGVTFQQVQKYEKGVNRVGAGRLQQISKALKVEPSYF. Residues 35–54 constitute a DNA-binding region (H-T-H motif); sequence QTTLGEAIGVTFQQVQKYEK.

This is an uncharacterized protein from Sinorhizobium fredii (strain NBRC 101917 / NGR234).